The following is a 444-amino-acid chain: Phosphoglucosamine mutase (444 aa).

Ser99 serves as the catalytic Phosphoserine intermediate. Positions 99, 242, 244, and 246 each coordinate Mg(2+). Position 99 is a phosphoserine (Ser99).

Belongs to the phosphohexose mutase family. It depends on Mg(2+) as a cofactor. Post-translationally, activated by phosphorylation.

It carries out the reaction alpha-D-glucosamine 1-phosphate = D-glucosamine 6-phosphate. Its function is as follows. Catalyzes the conversion of glucosamine-6-phosphate to glucosamine-1-phosphate. The polypeptide is Phosphoglucosamine mutase (Aliarcobacter butzleri (strain RM4018) (Arcobacter butzleri)).